We begin with the raw amino-acid sequence, 291 residues long: MVAFSSLFLGASIAATALAAPGELPGMHLNKRQTYTQSATGTHDGYYFSFWTDGGPNVRYTNEAGGQYSVTWSGNGNWVGGKGWNPGAARTINYTGTYQPNGNSYLAVYGWTRNPLVEYYVVENFGTYDPSTGAQRLGSINVDGSTYNVYRTRRTNAPSIEGTRSFDQYWSVRVNKRVGGSVDMNAHFNAWRQAGLTLGTHDYQIVATEGYFSSGSARINVGGGSTGGGNNGGGNNGGNPGGNPGGNPGGNPGGNCSPRWGQCGGQGWNGPTCCESGTTCRQQNQWYSQCL.

A signal peptide spans 1 to 19 (MVAFSSLFLGASIAATALA). The GH11 domain occupies 34–222 (TYTQSATGTH…SSGSARINVG (189 aa)). Residue asparagine 93 is glycosylated (N-linked (GlcNAc...) asparagine). Glutamate 118 functions as the Nucleophile in the catalytic mechanism. The Proton donor role is filled by glutamate 209. The interval 223–246 (GGSTGGGNNGGGNNGGNPGGNPGG) is disordered. The CBM1 domain maps to 255-291 (NCSPRWGQCGGQGWNGPTCCESGTTCRQQNQWYSQCL).

It belongs to the glycosyl hydrolase 11 (cellulase G) family.

It localises to the secreted. The catalysed reaction is Endohydrolysis of (1-&gt;4)-beta-D-xylosidic linkages in xylans.. It participates in glycan degradation; xylan degradation. Its activity is regulated as follows. The activity iss completely inhibited by Hg(2+), a metal ion that interacts with Trp and oxidizes the indole ring, and is significantly enhanced by beta-mercaptoethanol, which counteracts the oxidation effects of the S-S linkage between Cys residues. Endo-1,4-beta-xylanase involved in the hydrolysis of xylan, a major structural heterogeneous polysaccharide found in plant biomass representing the second most abundant polysaccharide in the biosphere, after cellulose. Shows maximum activity on soluble wheat arabinoxylan (defined as 100%), moderate activity on birchwood xylan (80.5%) and beechwood xylan (76.2%), and weak activity on insoluble wheat arabinoxylan (7.0%). Has no activity towards glucan or carboxymethyl cellulose-sodium (CMC-Na). The sequence is that of Endo-1,4-beta-xylanase 11B from Humicola insolens (Soft-rot fungus).